Consider the following 293-residue polypeptide: Signal recognition particle receptor FtsY (293 aa).

GTP contacts are provided by residues 93-100, 175-179, and 239-242; these read GVNGAGKT, DTAGR, and TKLD.

Belongs to the GTP-binding SRP family. FtsY subfamily. Part of the signal recognition particle protein translocation system, which is composed of SRP and FtsY. SRP is a ribonucleoprotein composed of Ffh and a 4.5S RNA molecule.

The protein resides in the cell inner membrane. The protein localises to the cytoplasm. It catalyses the reaction GTP + H2O = GDP + phosphate + H(+). Its function is as follows. Involved in targeting and insertion of nascent membrane proteins into the cytoplasmic membrane. Acts as a receptor for the complex formed by the signal recognition particle (SRP) and the ribosome-nascent chain (RNC). Interaction with SRP-RNC leads to the transfer of the RNC complex to the Sec translocase for insertion into the membrane, the hydrolysis of GTP by both Ffh and FtsY, and the dissociation of the SRP-FtsY complex into the individual components. The sequence is that of Signal recognition particle receptor FtsY from Helicobacter pylori (strain ATCC 700392 / 26695) (Campylobacter pylori).